Reading from the N-terminus, the 201-residue chain is Small ribosomal subunit protein uS4 (201 aa).

Positions 93–153 (QRLDNIVYRL…EKSKNLVIIK (61 aa)) constitute an S4 RNA-binding domain.

This sequence belongs to the universal ribosomal protein uS4 family. As to quaternary structure, part of the 30S ribosomal subunit. Contacts protein S5. The interaction surface between S4 and S5 is involved in control of translational fidelity.

Functionally, one of the primary rRNA binding proteins, it binds directly to 16S rRNA where it nucleates assembly of the body of the 30S subunit. With S5 and S12 plays an important role in translational accuracy. The protein is Small ribosomal subunit protein uS4 of Latilactobacillus sakei subsp. sakei (strain 23K) (Lactobacillus sakei subsp. sakei).